The chain runs to 278 residues: S-formylglutathione hydrolase YeiG (278 aa).

Residues Ser145, Asp223, and His256 each act as charge relay system in the active site.

Belongs to the esterase D family.

It carries out the reaction S-formylglutathione + H2O = formate + glutathione + H(+). Serine hydrolase involved in the detoxification of formaldehyde. Hydrolyzes S-formylglutathione to glutathione and formate. The polypeptide is S-formylglutathione hydrolase YeiG (yeiG) (Escherichia coli (strain SMS-3-5 / SECEC)).